Consider the following 89-residue polypeptide: Small ribosomal subunit protein uS15 (89 aa).

This sequence belongs to the universal ribosomal protein uS15 family. Part of the 30S ribosomal subunit. Forms a bridge to the 50S subunit in the 70S ribosome, contacting the 23S rRNA.

In terms of biological role, one of the primary rRNA binding proteins, it binds directly to 16S rRNA where it helps nucleate assembly of the platform of the 30S subunit by binding and bridging several RNA helices of the 16S rRNA. Its function is as follows. Forms an intersubunit bridge (bridge B4) with the 23S rRNA of the 50S subunit in the ribosome. This chain is Small ribosomal subunit protein uS15, found in Bifidobacterium longum subsp. infantis (strain ATCC 15697 / DSM 20088 / JCM 1222 / NCTC 11817 / S12).